A 135-amino-acid polypeptide reads, in one-letter code: Small ribosomal subunit protein bS16 (135 aa).

Belongs to the bacterial ribosomal protein bS16 family.

In Prosthecochloris aestuarii (strain DSM 271 / SK 413), this protein is Small ribosomal subunit protein bS16.